A 507-amino-acid chain; its full sequence is Maturase K (507 aa).

It belongs to the intron maturase 2 family. MatK subfamily.

It is found in the plastid. It localises to the chloroplast. Usually encoded in the trnK tRNA gene intron. Probably assists in splicing its own and other chloroplast group II introns. The protein is Maturase K of Buxus microphylla (Littleleaf boxwood).